Here is a 231-residue protein sequence, read N- to C-terminus: Ribose-5-phosphate isomerase A (231 aa).

Substrate contacts are provided by residues 28–31, 83–86, and 96–99; these read TGST, DGAD, and KGGG. The active-site Proton acceptor is the Glu-105. Lys-123 provides a ligand contact to substrate.

This sequence belongs to the ribose 5-phosphate isomerase family. Homodimer.

It carries out the reaction aldehydo-D-ribose 5-phosphate = D-ribulose 5-phosphate. Its pathway is carbohydrate degradation; pentose phosphate pathway; D-ribose 5-phosphate from D-ribulose 5-phosphate (non-oxidative stage): step 1/1. In terms of biological role, catalyzes the reversible conversion of ribose-5-phosphate to ribulose 5-phosphate. This is Ribose-5-phosphate isomerase A from Rhizobium meliloti (strain 1021) (Ensifer meliloti).